The chain runs to 499 residues: Probable cytosol aminopeptidase (499 aa).

Positions 263 and 268 each coordinate Mn(2+). Lys-275 is a catalytic residue. Asp-286, Asp-345, and Glu-347 together coordinate Mn(2+). Residue Arg-349 is part of the active site.

Belongs to the peptidase M17 family. Requires Mn(2+) as cofactor.

It localises to the cytoplasm. It carries out the reaction Release of an N-terminal amino acid, Xaa-|-Yaa-, in which Xaa is preferably Leu, but may be other amino acids including Pro although not Arg or Lys, and Yaa may be Pro. Amino acid amides and methyl esters are also readily hydrolyzed, but rates on arylamides are exceedingly low.. It catalyses the reaction Release of an N-terminal amino acid, preferentially leucine, but not glutamic or aspartic acids.. Presumably involved in the processing and regular turnover of intracellular proteins. Catalyzes the removal of unsubstituted N-terminal amino acids from various peptides. The sequence is that of Probable cytosol aminopeptidase (pepA) from Chlamydia trachomatis serovar D (strain ATCC VR-885 / DSM 19411 / UW-3/Cx).